The sequence spans 602 residues: Sodium- and chloride-dependent GABA transporter 2 (602 aa).

Over 1–40 (MDSRVSGTTSNGETKPVCPGLEKAAEDGALQREQWSNKME) the chain is Cytoplasmic. The next 3 helical transmembrane spans lie at 41 to 61 (FLLS…FPYL), 68 to 88 (GAFF…VFLL), and 121 to 141 (IVTL…FYLF). The Extracellular segment spans residues 142-206 (SSFTIDLPWG…GIQHLGALRW (65 aa)). Cys153 and Cys162 are disulfide-bonded. N-linked (GlcNAc...) asparagine glycosylation is found at Asn169 and Asn173. 2 helical membrane passes run 207-227 (ELAL…WKGV) and 233-253 (VVYF…IRGV). Asn269 carries N-linked (GlcNAc...) asparagine glycosylation. 7 helical membrane-spanning segments follow: residues 282 to 302 (AGTQ…ALGS), 319 to 339 (FLNS…LGFM), 366 to 386 (VVML…VVLL), 418 to 438 (VLIL…LTEG), 453 to 473 (GMCL…AYGA), 490 to 510 (PLIK…TFLF), and 528 to 548 (WWGD…IPAW). Residues 549 to 602 (SCYKLSTLKGSFRERVRQLLCPAKDLPQGHREGPSAPATPRTSLLILTELEPHH) lie on the Cytoplasmic side of the membrane. A Phosphothreonine modification is found at Thr587. Ser591 bears the Phosphoserine mark.

It belongs to the sodium:neurotransmitter symporter (SNF) (TC 2.A.22) family. SLC6A13 subfamily.

It localises to the cell membrane. The protein localises to the basolateral cell membrane. The catalysed reaction is 4-aminobutanoate(out) + chloride(out) + 2 Na(+)(out) = 4-aminobutanoate(in) + chloride(in) + 2 Na(+)(in). It catalyses the reaction taurine(out) + chloride(out) + 2 Na(+)(out) = taurine(in) + chloride(in) + 2 Na(+)(in). It carries out the reaction beta-alanine(out) + chloride(out) + 2 Na(+)(out) = beta-alanine(in) + chloride(in) + 2 Na(+)(in). The enzyme catalyses hypotaurine(out) + chloride(out) + 2 Na(+)(out) = hypotaurine(in) + chloride(in) + 2 Na(+)(in). Its function is as follows. Mediates sodium- and chloride-dependent transport of gamma-aminobutyric acid (GABA). Can also mediate transport of beta-alanine, taurine and hypotaurine. The polypeptide is Sodium- and chloride-dependent GABA transporter 2 (SLC6A13) (Bos taurus (Bovine)).